A 481-amino-acid polypeptide reads, in one-letter code: FAD-linked oxidoreductase afoF (481 aa).

An N-terminal signal peptide occupies residues Met1–Ala16. The FAD-binding PCMH-type domain occupies Ser52–Gln227. N-linked (GlcNAc...) asparagine glycosylation is present at Asn82. Residue His92 is modified to Pros-8alpha-FAD histidine. N-linked (GlcNAc...) asparagine glycans are attached at residues Asn196, Asn241, Asn276, Asn309, Asn312, and Asn376.

Belongs to the oxygen-dependent FAD-linked oxidoreductase family. FAD serves as cofactor.

Functionally, FAD-linked oxidoreductase; part of the gene cluster that mediates the biosynthesis of asperfuranone, a probable antitumor agent. The polyketide synthase afoG is responsible for producing the 3,5-dimethyloctadienone moiety from acetyl-CoA, three malonyl-CoA, and two S-adenosyl methionines (SAM). The 3,5-dimethyloctadienone moiety is then loaded onto the SAT domain of afoE and extended with four malonyl-CoA and one SAM, which leads to the formation of 2,4-dihydroxy-6-(5,7-dimethyl-2-oxo-trans-3-trans-5-nonadienyl)-3-methylbenzaldehyde (compound 2) after reductive release and aldol condensation. AfoD is the next enzyme in the biosynthesis sequence and hydroxylates the side chain at the benzylic position of compound 2. After benzylic hydroxylation, a furan ring is formed after five-member ring hemiacetal formation and water elimination. AfoF and afoC are proposed to oxidize the R-diketone proton and to reduce the unconjugated carbonyl group, respectively, to generate asperfuranone. Since no intermediates could be isolated from afoF and afoC deletants, the sequence of these two enzymes is not fully understood. Moreover, since afoC deletant still produces a small amount of asperfuranone, other endogenous oxidoreductases might catalyze the same reaction with much less efficiency. The chain is FAD-linked oxidoreductase afoF from Emericella nidulans (strain FGSC A4 / ATCC 38163 / CBS 112.46 / NRRL 194 / M139) (Aspergillus nidulans).